Consider the following 419-residue polypeptide: NF-kappa-B essential modulator (419 aa).

The segment at 1 to 46 is disordered; the sequence is MSRTPWKSQPCEMVQPSGGPAGDQDVLGEESSLGKPTMLHLPSEQG. The interval 1-197 is required for interaction with and ubiquitination by MARCHF2; it reads MSRTPWKSQP…REALQQQHSV (197 aa). 4 positions are modified to phosphoserine: Ser31, Ser43, Ser68, and Ser85. Positions 44 to 111 are interaction with CHUK/IKBKB; sequence EQGAPETFQR…RLVERLSLEK (68 aa). The stretch at 100–353 forms a coiled coil; sequence ARRLVERLSL…KTSCQESARI (254 aa). Residues Lys111, Lys139, Lys143, Lys226, Lys246, and Lys264 each participate in a glycyl lysine isopeptide (Lys-Gly) (interchain with G-Cter in ubiquitin) cross-link. The interaction with TANK stretch occupies residues 150–257; that stretch reads LGELQESQSR…SVVSSERNRG (108 aa). The interval 242 to 350 is ubiquitin-binding (UBAN); the sequence is DNHIKSSVVS…SRLKTSCQES (109 aa). The tract at residues 246–365 is self-association; it reads KSSVVSSERN…MRKRHVEVSQ (120 aa). The tract at residues 251–419 is required for interaction with TNFAIP3; that stretch reads SSERNRGLQL…LQIHVMECIE (169 aa). Lys277 participates in a covalent cross-link: Glycyl lysine isopeptide (Lys-Gly) (interchain with G-Cter in SUMO); alternate. Residue Lys277 forms a Glycyl lysine isopeptide (Lys-Gly) (interchain with G-Cter in ubiquitin); alternate linkage. Glycyl lysine isopeptide (Lys-Gly) (interchain with G-Cter in ubiquitin) cross-links involve residues Lys283, Lys285, Lys292, and Lys302. A Glycyl lysine isopeptide (Lys-Gly) (interchain with G-Cter in SUMO); alternate cross-link involves residue Lys309. Lys309 participates in a covalent cross-link: Glycyl lysine isopeptide (Lys-Gly) (interchain with G-Cter in ubiquitin); alternate. The leucine-zipper stretch occupies residues 322 to 343; the sequence is LAERKELLQEQLEQLQREYSRL. A Glycyl lysine isopeptide (Lys-Gly) (interchain with G-Cter in ubiquitin) cross-link involves residue Lys326. Positions 363–394 are disordered; that stretch reads VSQPTLPPAPAHHSFHPALPSQRRSPPEEPPN. A phosphoserine mark is found at Ser376 and Ser387. Residues 382–419 are interaction with CYLD; sequence PSQRRSPPEEPPNFCCPKCQYQAPDMDTLQIHVMECIE. The CCHC NOA-type zinc-finger motif lies at 389–419; sequence PEEPPNFCCPKCQYQAPDMDTLQIHVMECIE. Residue Cys397 participates in Zn(2+) binding. Lys399 participates in a covalent cross-link: Glycyl lysine isopeptide (Lys-Gly) (interchain with G-Cter in ubiquitin). Cys400, His413, and Cys417 together coordinate Zn(2+).

In terms of assembly, homodimer; disulfide-linked. Component of the I-kappa-B-kinase (IKK) core complex consisting of CHUK, IKBKB and IKBKG; probably four alpha/CHUK-beta/IKBKB dimers are associated with four gamma/IKBKG subunits. The IKK core complex seems to associate with regulatory or adapter proteins to form a IKK-signalosome holo-complex. The IKK complex associates with TERF2IP/RAP1, leading to promote IKK-mediated phosphorylation of RELA/p65. Part of a complex composed of NCOA2, NCOA3, CHUK/IKKA, IKBKB, IKBKG and CREBBP. Interacts with COPS3, CYLD, NALP2, TRPC4AP and PIDD1. Interacts with ATM; the complex is exported from the nucleus. Interacts with TRAF6. Interacts with IKBKE. Interacts with TANK; the interaction is enhanced by IKBKE and TBK1. Part of a ternary complex consisting of TANK, IKBKB and IKBKG. Interacts with ZFAND5. Interacts with RIPK2. Interacts with TNIP1 and TNFAIP3; TNIP1 facilitates the TNFAIP3-mediated de-ubiquitination of IKBKG. Interacts with TNFAIP3; the interaction is induced by TNF stimulation and by polyubiquitin. Binds (via UBAN region) polyubiquitin; binds both 'Lys-63'-linked and linear polyubiquitin, with higher affinity for linear ubiquitin. Interacts with NLRP10. Interacts with TANK; this interaction increases in response to DNA damage. Interacts with USP10; this interaction increases in response to DNA damage. Interacts with ZC3H12A; this interaction increases in response to DNA damage. Interacts with IFIT5; the interaction synergizes the recruitment of IKK to MAP3K7 and enhances IKK phosphorylation. Interacts with TRIM29; this interaction induces IKBKG/NEMO ubiquitination and proteolytic degradation. Interacts with TRIM13; this interaction leads to IKBKG/NEMO ubiquitination. Interacts with ARFIP2. Interacts with RIPK1. Interacts with (ubiquitinated) BCL10; interaction with polyubiquitinated BCL10 via both 'Lys-63'-linked and linear ubiquitin is required for TCR-induced NF-kappa-B activation. Interacts with MARCHF2; during the late stages of macrophage viral and bacterial infection; the interaction leads to ubiquitination and degradation of IKBKG/NEMO. In terms of processing, phosphorylation at Ser-68 attenuates aminoterminal homodimerization. Post-translationally, polyubiquitinated on Lys-285 via 'Lys-63'-linked ubiquitin; the ubiquitination is mediated downstream of NOD2 and RIPK2 and probably plays a role in signaling by facilitating interactions with ubiquitin domain-containing proteins and activates the NF-kappa-B pathway. Polyubiquitinated on Lys-285 and Lys-399 through 'Lys-63'-linked ubiquitin; the ubiquitination is mediated by BCL10, MALT1 and TRAF6 and probably plays a role in signaling by facilitating interactions with ubiquitin domain-containing proteins and activates the NF-kappa-B pathway. Monoubiquitinated on Lys-277 and Lys-309; promotes nuclear export. Polyubiquitinated through 'Lys-27' by TRIM23; involved in antiviral innate and inflammatory responses. Linear polyubiquitinated on Lys-111, Lys-143, Lys-226, Lys-246, Lys-264, Lys-277, Lys-285, Lys-292, Lys-302, Lys-309 and Lys-326; the head-to-tail polyubiquitination is mediated by the LUBAC complex and plays a key role in NF-kappa-B activation. Deubiquitinated by USP10 in a TANK-dependent and -independent manner, leading to the negative regulation of NF-kappa-B signaling upon DNA damage. Ubiquitinated at Lys-326 by MARCHF2 following bacterial and viral infection which leads to its degradation. Sumoylated on Lys-277 and Lys-309 with SUMO1; the modification results in phosphorylation of Ser-85 by ATM leading to a replacement of the sumoylation by mono-ubiquitination on these residues. In terms of processing, neddylated by TRIM40, resulting in stabilization of NFKBIA and down-regulation of NF-kappa-B activity. Post-translationally, (Microbial infection) Cleaved by porcine reproductive and respiratory syndrome virus serine protease nsp4 after Glu-349. The cleavage inhibits NEMO proper function.

It localises to the cytoplasm. The protein localises to the nucleus. In terms of biological role, regulatory subunit of the IKK core complex which phosphorylates inhibitors of NF-kappa-B thus leading to the dissociation of the inhibitor/NF-kappa-B complex and ultimately the degradation of the inhibitor. Its binding to scaffolding polyubiquitin plays a key role in IKK activation by multiple signaling receptor pathways. Can recognize and bind both 'Lys-63'-linked and linear polyubiquitin upon cell stimulation, with a much highr affinity for linear polyubiquitin. Could be implicated in NF-kappa-B-mediated protection from cytokine toxicity. Essential for viral activation of IRF3. Involved in TLR3- and IFIH1-mediated antiviral innate response; this function requires 'Lys-27'-linked polyubiquitination. This is NF-kappa-B essential modulator (IKBKG) from Sus scrofa (Pig).